The following is a 416-amino-acid chain: Orexin/Hypocretin receptor type 1 (416 aa).

The disordered stretch occupies residues 1-22 (MEPSATPGAQPGVPTSSGEPFH). Residues 1–46 (MEPSATPGAQPGVPTSSGEPFHLPPDYEDEFLRYLWRDYLYPKQYE) lie on the Extracellular side of the membrane. The required for response to orexin-A stretch occupies residues 26-41 (DYEDEFLRYLWRDYLY). The chain crosses the membrane as a helical span at residues 47–67 (WVLIAAYVAVFLIALVGNTLV). At 68–82 (CLAVWRNHHMRTVTN) the chain is on the cytoplasmic side. A helical membrane pass occupies residues 83 to 105 (YFIVNLSLADVLVTAICLPASLL). Over 106–119 (VDITESWLFGHALC) the chain is Extracellular. Cysteine 119 and cysteine 202 are disulfide-bonded. Residues 120–140 (KVIPYLQAVSVSVAVLTLSFI) form a helical membrane-spanning segment. Topologically, residues 141–160 (ALDRWYAICHPLLFKSTARR) are cytoplasmic. The chain crosses the membrane as a helical span at residues 161–182 (ARGSILGIWAVSLAVMVPQAAV). The Extracellular portion of the chain corresponds to 183–213 (MECSSVLPELANRTRLFSVCDERWADELYPK). N-linked (GlcNAc...) asparagine glycosylation is present at asparagine 194. A helical transmembrane segment spans residues 214–235 (IYHSCFFFVTYLAPLGLMGMAY). Over 236–298 (FQIFRKLWGP…QMRARRKTAK (63 aa)) the chain is Cytoplasmic. The helical transmembrane segment at 299–321 (MLMVVLLVFALCYLPISVLNVLK) threads the bilayer. The Extracellular segment spans residues 322 to 336 (RVFGMFRQASDREAV). The chain crosses the membrane as a helical span at residues 337-360 (YACFTFSHWLVYANSAANPIIYNF). Topologically, residues 361–416 (LSGKFREQFKAAFSCCLPGLGPSSSARHKSLSLQSRCSVSKVSEHVVLTTVTTVLS) are cytoplasmic.

The protein belongs to the G-protein coupled receptor 1 family. As to expression, highly expressed in the brain in the prefrontal cortex, hippocampus, paraventricular thalamus, ventromedial hypothalamus, arcuate nucleus, dorsal raphe nucleus, and locus coeruleus. Not detected in the spleen, lung, liver, skeletal muscle, kidney and testis. Orexin receptor mRNA expression has also been reported in the adrenal gland, enteric nervous system, and pancreas.

It localises to the cell membrane. Moderately selective excitatory receptor for orexin-A and, with a lower affinity, for orexin-B neuropeptide. Triggers an increase in cytoplasmic Ca(2+) levels in response to orexin-A binding. The chain is Orexin/Hypocretin receptor type 1 from Rattus norvegicus (Rat).